The chain runs to 242 residues: Large ribosomal subunit protein uL3 (242 aa).

The interval 131–165 (GRATHGNSVSHRTHGSTGQRQDPGKVFKGKKMAGH) is disordered. Residues 135 to 150 (HGNSVSHRTHGSTGQR) show a composition bias toward polar residues. Gln151 carries the post-translational modification N5-methylglutamine.

The protein belongs to the universal ribosomal protein uL3 family. As to quaternary structure, part of the 50S ribosomal subunit. Forms a cluster with proteins L14 and L19. In terms of processing, methylated by PrmB.

One of the primary rRNA binding proteins, it binds directly near the 3'-end of the 23S rRNA, where it nucleates assembly of the 50S subunit. This is Large ribosomal subunit protein uL3 from Chelativorans sp. (strain BNC1).